The primary structure comprises 129 residues: MKKLQIAVGIIRNENNEIFITRRAADAHMANKLEFPGGKIEMGETPEQAVVRELQEEVGITPQHFSLFEKLEYEFPDRHITLWFWLVERWEGEPWGKEGQPGEWMSLVGLNADDFPPANEPVIAKLKRL.

Residues 1–129 form the Nudix hydrolase domain; it reads MKKLQIAVGI…EPVIAKLKRL (129 aa). 8-oxo-dGTP-binding positions include Arg23, His28, and 34–37; that span reads EFPG. Residues Gly37 and Glu57 each coordinate Mg(2+). The Nudix box motif lies at 38-59; sequence GKIEMGETPEQAVVRELQEEVG. An 8-oxo-dGTP-binding site is contributed by Asn119.

It belongs to the Nudix hydrolase family. As to quaternary structure, monomer. It depends on Mg(2+) as a cofactor.

The catalysed reaction is 8-oxo-dGTP + H2O = 8-oxo-dGMP + diphosphate + H(+). The enzyme catalyses 8-oxo-GTP + H2O = 8-oxo-GMP + diphosphate + H(+). It catalyses the reaction 8-oxo-dGDP + H2O = 8-oxo-dGMP + phosphate + H(+). It carries out the reaction 8-oxo-GDP + H2O = 8-oxo-GMP + phosphate + H(+). Specifically hydrolyzes both 8-oxo-deoxyguanosine triphosphate (8-oxo-dGTP) and 8-oxo-guanosine triphosphate (8-oxo-GTP) to the related monophosphates, thereby cleaning up the nucleotide pools and preventing misincorporation of 8-oxoGua into DNA and RNA. It prevents replicational errors by removing an oxidatively damaged form of guanine (8-oxo-dGTP) from DNA and the nucleotide pool. 8-oxo-dGTP can be inserted opposite dA and dC residues of template DNA with almost equal efficiency thus leading to A.T to G.C transversions. MutT may also ensure transcriptional fidelity, removing 8-oxo-GTP from the ribonucleotide triphosphate pool. However, due to the lower efficiency of RNA polymerase 8-oxo-GTP incorporation, MutT is probably not a major contributor to transcriptional fidelity. It also hydrolyzes 8-oxo-dGDP and 8-oxo-GDP to their monophosphate form. In vitro, can also use dGTP, dGDP and other various nucleoside di- and triphosphates, with much lower efficiency. Works cooperatively with MutM and MutY to prevent accumulation in the DNA of oxidized guanine residues. The polypeptide is 8-oxo-dGTP diphosphatase (Escherichia coli (strain K12)).